The sequence spans 262 residues: tRNA (guanine-N(1)-)-methyltransferase (262 aa).

Residues G113 and 137-142 (IGDYVL) contribute to the S-adenosyl-L-methionine site.

This sequence belongs to the RNA methyltransferase TrmD family. In terms of assembly, homodimer.

It localises to the cytoplasm. The enzyme catalyses guanosine(37) in tRNA + S-adenosyl-L-methionine = N(1)-methylguanosine(37) in tRNA + S-adenosyl-L-homocysteine + H(+). In terms of biological role, specifically methylates guanosine-37 in various tRNAs. In Saccharopolyspora erythraea (strain ATCC 11635 / DSM 40517 / JCM 4748 / NBRC 13426 / NCIMB 8594 / NRRL 2338), this protein is tRNA (guanine-N(1)-)-methyltransferase.